We begin with the raw amino-acid sequence, 286 residues long: 33 kDa chaperonin (286 aa).

Cystine bridges form between C225–C227 and C258–C261.

Belongs to the HSP33 family. Under oxidizing conditions two disulfide bonds are formed involving the reactive cysteines. Under reducing conditions zinc is bound to the reactive cysteines and the protein is inactive.

The protein localises to the cytoplasm. In terms of biological role, redox regulated molecular chaperone. Protects both thermally unfolding and oxidatively damaged proteins from irreversible aggregation. Plays an important role in the bacterial defense system toward oxidative stress. In Shewanella baltica (strain OS223), this protein is 33 kDa chaperonin.